The following is a 196-amino-acid chain: Protein LSM12 homolog B (196 aa).

One can recognise a Sm domain in the interval 3–70 (APGPGEYFSV…LAYVSEVDII (68 aa)). The 95-residue stretch at 81–175 (ASLNFNKLVN…IVEKHFRDVE (95 aa)) folds into the AD domain.

It belongs to the LSM12 family.

The sequence is that of Protein LSM12 homolog B (lsm12b) from Danio rerio (Zebrafish).